Consider the following 302-residue polypeptide: Sulfate adenylyltransferase subunit 2 (302 aa).

This sequence belongs to the PAPS reductase family. CysD subfamily. As to quaternary structure, heterodimer composed of CysD, the smaller subunit, and CysN.

It carries out the reaction sulfate + ATP + H(+) = adenosine 5'-phosphosulfate + diphosphate. It participates in sulfur metabolism; hydrogen sulfide biosynthesis; sulfite from sulfate: step 1/3. Functionally, with CysN forms the ATP sulfurylase (ATPS) that catalyzes the adenylation of sulfate producing adenosine 5'-phosphosulfate (APS) and diphosphate, the first enzymatic step in sulfur assimilation pathway. APS synthesis involves the formation of a high-energy phosphoric-sulfuric acid anhydride bond driven by GTP hydrolysis by CysN coupled to ATP hydrolysis by CysD. The polypeptide is Sulfate adenylyltransferase subunit 2 (Enterobacter sp. (strain 638)).